Consider the following 882-residue polypeptide: Valine--tRNA ligase (882 aa).

The 'HIGH' region motif lies at 45–55 (PNVTGSLHIGH). The 'KMSKS' region signature appears at 525 to 529 (KFSKS). K528 is an ATP binding site. The stretch at 812–881 (EGLIDVAKEK…VLKKGIQNLA (70 aa)) forms a coiled coil.

This sequence belongs to the class-I aminoacyl-tRNA synthetase family. ValS type 1 subfamily. In terms of assembly, monomer.

The protein localises to the cytoplasm. It catalyses the reaction tRNA(Val) + L-valine + ATP = L-valyl-tRNA(Val) + AMP + diphosphate. In terms of biological role, catalyzes the attachment of valine to tRNA(Val). As ValRS can inadvertently accommodate and process structurally similar amino acids such as threonine, to avoid such errors, it has a 'posttransfer' editing activity that hydrolyzes mischarged Thr-tRNA(Val) in a tRNA-dependent manner. This Leptospira interrogans serogroup Icterohaemorrhagiae serovar Lai (strain 56601) protein is Valine--tRNA ligase.